A 270-amino-acid chain; its full sequence is NAD kinase (270 aa).

Residue D49 is the Proton acceptor of the active site. NAD(+)-binding positions include 49–50, R54, 126–127, R152, D154, 165–170, A189, and Q227; these read DG, NE, and TAYNKS.

Belongs to the NAD kinase family. A divalent metal cation serves as cofactor.

Its subcellular location is the cytoplasm. It catalyses the reaction NAD(+) + ATP = ADP + NADP(+) + H(+). In terms of biological role, involved in the regulation of the intracellular balance of NAD and NADP, and is a key enzyme in the biosynthesis of NADP. Catalyzes specifically the phosphorylation on 2'-hydroxyl of the adenosine moiety of NAD to yield NADP. The sequence is that of NAD kinase from Lactococcus lactis subsp. cremoris (strain MG1363).